Reading from the N-terminus, the 91-residue chain is Elongation factor 1-beta (91 aa).

Belongs to the EF-1-beta/EF-1-delta family.

Its function is as follows. Promotes the exchange of GDP for GTP in EF-1-alpha/GDP, thus allowing the regeneration of EF-1-alpha/GTP that could then be used to form the ternary complex EF-1-alpha/GTP/AAtRNA. This chain is Elongation factor 1-beta, found in Thermofilum pendens (strain DSM 2475 / Hrk 5).